The chain runs to 1070 residues: DNA-directed RNA polymerase subunit beta (1070 aa).

It belongs to the RNA polymerase beta chain family. In terms of assembly, in plastids the minimal PEP RNA polymerase catalytic core is composed of four subunits: alpha, beta, beta', and beta''. When a (nuclear-encoded) sigma factor is associated with the core the holoenzyme is formed, which can initiate transcription.

The protein resides in the plastid. It localises to the chloroplast. The catalysed reaction is RNA(n) + a ribonucleoside 5'-triphosphate = RNA(n+1) + diphosphate. Its function is as follows. DNA-dependent RNA polymerase catalyzes the transcription of DNA into RNA using the four ribonucleoside triphosphates as substrates. The chain is DNA-directed RNA polymerase subunit beta from Nicotiana sylvestris (Wood tobacco).